Here is a 310-residue protein sequence, read N- to C-terminus: Probable deoxyhypusine synthase (310 aa).

Lys-284 acts as the Nucleophile in catalysis.

This sequence belongs to the deoxyhypusine synthase family. It depends on NAD(+) as a cofactor.

It catalyses the reaction [eIF5A protein]-L-lysine + spermidine = [eIF5A protein]-deoxyhypusine + propane-1,3-diamine. It participates in protein modification; eIF5A hypusination. Its function is as follows. Catalyzes the NAD-dependent oxidative cleavage of spermidine and the subsequent transfer of the butylamine moiety of spermidine to the epsilon-amino group of a specific lysine residue of the eIF-5A precursor protein to form the intermediate deoxyhypusine residue. This chain is Probable deoxyhypusine synthase (dys), found in Thermoplasma acidophilum (strain ATCC 25905 / DSM 1728 / JCM 9062 / NBRC 15155 / AMRC-C165).